A 1117-amino-acid polypeptide reads, in one-letter code: Zinc finger E-box-binding homeobox 1 (1117 aa).

Disordered regions lie at residues Met-1–Asp-103 and Ala-122–Pro-143. The span at Pro-15–Asn-30 shows a compositional bias: low complexity. Phosphoserine occurs at positions 31 and 33. Residues Leu-150–His-173 form a C2H2-type 1 zinc finger. Glycyl lysine isopeptide (Lys-Gly) (interchain with G-Cter in SUMO2) cross-links involve residues Lys-166 and Lys-175. C2H2-type zinc fingers lie at residues Phe-180–His-202 and Phe-220–His-242. A C2H2-type 4; atypical zinc finger spans residues Tyr-248–Cys-272. Residues Val-278–Gln-307 form a disordered region. Lys-287 is covalently cross-linked (Glycyl lysine isopeptide (Lys-Gly) (interchain with G-Cter in SUMO2)). The span at Thr-288–Thr-304 shows a compositional bias: low complexity. Ser-293 and Ser-302 each carry phosphoserine. Residues Lys-311 and Lys-315 each participate in a glycyl lysine isopeptide (Lys-Gly) (interchain with G-Cter in SUMO2) cross-link. Lys-327 is covalently cross-linked (Glycyl lysine isopeptide (Lys-Gly) (interchain with G-Cter in SUMO); alternate). Lys-327 participates in a covalent cross-link: Glycyl lysine isopeptide (Lys-Gly) (interchain with G-Cter in SUMO2); alternate. Residues Lys-419, Lys-473, Lys-484, Lys-495, and Lys-528 each participate in a glycyl lysine isopeptide (Lys-Gly) (interchain with G-Cter in SUMO2) cross-link. Disordered stretches follow at residues Ile-476–Ser-501, Lys-528–Pro-566, and Gly-613–Asn-687. The span at Lys-484–Ser-501 shows a compositional bias: basic and acidic residues. A DNA-binding region (homeobox; atypical) is located at residues Asp-559–Gln-618. 4 positions are modified to phosphoserine: Ser-657, Ser-664, Ser-671, and Ser-678. The segment covering Met-673–Asn-687 has biased composition (polar residues). Thr-680 carries the phosphothreonine modification. At Ser-682 the chain carries Phosphoserine. A Glycyl lysine isopeptide (Lys-Gly) (interchain with G-Cter in SUMO); alternate cross-link involves residue Lys-752. A Glycyl lysine isopeptide (Lys-Gly) (interchain with G-Cter in SUMO2); alternate cross-link involves residue Lys-752. Residues Pro-834–Lys-876 are disordered. Polar residues predominate over residues Ser-852–Thr-868. 2 consecutive C2H2-type zinc fingers follow at residues Tyr-882 to His-904 and His-910 to His-932. The C2H2-type 7; atypical zinc finger occupies Tyr-938 to His-959. The interval Glu-991–Ala-1117 is disordered. Composition is skewed to acidic residues over residues Glu-1013–Leu-1032, Gln-1042–Glu-1069, and Ser-1098–Leu-1109.

The protein belongs to the delta-EF1/ZFH-1 C2H2-type zinc-finger family. As to quaternary structure, interacts (via N-terminus) with SMARCA4/BRG1. Post-translationally, ubiquitinated, leading to degradation in a proteasome-dependent manner. Deubiquitinated by USP51, leading to stabilization. As to expression, expressed in the external germinal layer (EGL) and internal granular layer (IGL) of the cerebellum (at protein level).

The protein resides in the nucleus. Functionally, acts as a transcriptional repressor. Binds to E-box sequences in the immunoglobulin heavy chain enhancer as well as in the regulatory regions of many other tissue-specific genes. Represses E-cadherin promoter and induces an epithelial-mesenchymal transition (EMT) by recruiting SMARCA4/BRG1. Represses BCL6 transcription in the presence of the corepressor CTBP1. Positively regulates neuronal differentiation. Represses RCOR1 transcription activation during neurogenesis. Represses transcription by binding to the E box (5'-CANNTG-3'). In the absence of TGFB1, acts as a repressor of COL1A2 transcription via binding to the E-box in the upstream enhancer region. Promotes tumorigenicity by repressing stemness-inhibiting microRNAs. This chain is Zinc finger E-box-binding homeobox 1, found in Mus musculus (Mouse).